The sequence spans 171 residues: Endoribonuclease YbeY (171 aa).

3 residues coordinate Zn(2+): histidine 126, histidine 130, and histidine 136.

This sequence belongs to the endoribonuclease YbeY family. Zn(2+) is required as a cofactor.

The protein localises to the cytoplasm. Functionally, single strand-specific metallo-endoribonuclease involved in late-stage 70S ribosome quality control and in maturation of the 3' terminus of the 16S rRNA. The sequence is that of Endoribonuclease YbeY from Rhizobium leguminosarum bv. trifolii (strain WSM2304).